We begin with the raw amino-acid sequence, 2495 residues long: Non-reducing polyketide synthase adrD (2495 aa).

The tract at residues 14-252 is N-terminal acylcarrier protein transacylase domain (SAT); sequence VVFGPQSSEI…HHSRHVTAVQ (239 aa). Positions 386–807 constitute a Ketosynthase family 3 (KS3) domain; it reads VIPIAITGMG…GSNAALVVKQ (422 aa). Residues cysteine 551, histidine 686, and histidine 725 each act as for beta-ketoacyl synthase activity in the active site. The malonyl-CoA:ACP transacylase (MAT) domain stretch occupies residues 913 to 1222; sequence LCFGGQNGNE…QALDLGGALA (310 aa). Serine 1000 acts as the For acyl/malonyl transferase activity in catalysis. Positions 1294–1422 are N-terminal hotdog fold; the sequence is KEFVQLLTKQ…GEISLHPFGQ (129 aa). A PKS/mFAS DH domain is found at 1294–1601; sequence KEFVQLLTKQ…FTSVSIAGLS (308 aa). Positions 1295–1600 are product template (PT) domain; it reads EFVQLLTKQP…TFTSVSIAGL (306 aa). Histidine 1325 serves as the catalytic Proton acceptor; for dehydratase activity. The tract at residues 1450 to 1601 is C-terminal hotdog fold; the sequence is ESSGLKGFAV…FTSVSIAGLS (152 aa). The Proton donor; for dehydratase activity role is filled by aspartate 1508. The 75-residue stretch at 1651-1725 folds into the Carrier domain; sequence SGHFMVVQEM…TLVQTIFPDA (75 aa). Residue serine 1685 is modified to O-(pantetheine 4'-phosphoryl)serine. The tract at residues 1887 to 2120 is methyltransferase (CMeT) domain; sequence QHTSEHNLLR…GFQWVDWTYN (234 aa). A thioesterase (TE) domain region spans residues 2150 to 2495; it reads YLMNEETIVY…YEFLRDHVRY (346 aa). Active-site for thioesterase activity residues include serine 2273 and aspartate 2432.

It catalyses the reaction 3 malonyl-CoA + acetyl-CoA + 2 S-adenosyl-L-methionine = 3,5-dimethylorsellinate + 2 S-adenosyl-L-homocysteine + 3 CO2 + 4 CoA. It participates in secondary metabolite biosynthesis; terpenoid biosynthesis. Its function is as follows. Non-reducing polyketide synthase; part of the gene cluster that mediates the biosynthesis of andrastins, meroterpenoid compounds that exhibit inhibitory activity against ras farnesyltransferase, suggesting that they could be promising leads for antitumor agents. The first step of the pathway is the synthesis of 3,5-dimethylorsellinic acid (DMOA) by the polyketide synthase adrD via condensation of one acetyl-CoA starter unit with 3 malonyl-CoA units and 2 methylations. DMAO is then converted to farnesyl-DMAO by the prenyltransferase adrG. The methyltransferase adrK catalyzes the methylation of the carboxyl group of farnesyl-DMAO to farnesyl-DMAO methyl ester which is further converted to epoxyfarnesyl-DMAO methyl ester by the FAD-dependent monooxygenase adrH. The terpene cyclase adrI then catalyzes the carbon skeletal rearrangement to generate the andrastin E, the first compound in the pathway having the andrastin scaffold, with the tetracyclic ring system. The post-cyclization tailoring enzymes adrF, adrE, adrJ, and adrA, are involved in the conversion of andrastin E into andrastin A. The short chain dehydrogenase adrF is responsible for the oxidation of the C-3 a hydroxyl group of andrastin E to yield the corresponding ketone, andrastin D. The ketoreductase adrE stereoselectively reduces the carbonyl moiety to reverse the stereochemistry of the C-3 position to yield andrastin F. The acetyltransferase adrJ is the acetyltransferase that attaches the acetyl group to the C-3 hydroxyl group of andrastin F to yield andrastin C. Finally, the cytochrome P450 monooxygenase adrA catalyzes two sequential oxidation reactions of the C-23 methyl group, to generate the corresponding alcohol andrastin B, and aldehyde andrastin A. The polypeptide is Non-reducing polyketide synthase adrD (Penicillium roqueforti).